A 219-amino-acid polypeptide reads, in one-letter code: Leucyl/phenylalanyl-tRNA--protein transferase (219 aa).

Belongs to the L/F-transferase family.

It is found in the cytoplasm. The enzyme catalyses N-terminal L-lysyl-[protein] + L-leucyl-tRNA(Leu) = N-terminal L-leucyl-L-lysyl-[protein] + tRNA(Leu) + H(+). The catalysed reaction is N-terminal L-arginyl-[protein] + L-leucyl-tRNA(Leu) = N-terminal L-leucyl-L-arginyl-[protein] + tRNA(Leu) + H(+). It catalyses the reaction L-phenylalanyl-tRNA(Phe) + an N-terminal L-alpha-aminoacyl-[protein] = an N-terminal L-phenylalanyl-L-alpha-aminoacyl-[protein] + tRNA(Phe). Its function is as follows. Functions in the N-end rule pathway of protein degradation where it conjugates Leu, Phe and, less efficiently, Met from aminoacyl-tRNAs to the N-termini of proteins containing an N-terminal arginine or lysine. The polypeptide is Leucyl/phenylalanyl-tRNA--protein transferase (Leptospira interrogans serogroup Icterohaemorrhagiae serovar copenhageni (strain Fiocruz L1-130)).